We begin with the raw amino-acid sequence, 513 residues long: 2-isopropylmalate synthase (513 aa).

Residues 4–268 form the Pyruvate carboxyltransferase domain; the sequence is IKIFDTTLRD…ETGIRTELIY (265 aa). Mn(2+) is bound by residues D13, H203, H205, and N239. Positions 392–513 are regulatory domain; it reads RLVHFHVHTG…GLLRKNGGVE (122 aa).

Belongs to the alpha-IPM synthase/homocitrate synthase family. LeuA type 1 subfamily. As to quaternary structure, homodimer. Mn(2+) serves as cofactor.

Its subcellular location is the cytoplasm. It catalyses the reaction 3-methyl-2-oxobutanoate + acetyl-CoA + H2O = (2S)-2-isopropylmalate + CoA + H(+). It participates in amino-acid biosynthesis; L-leucine biosynthesis; L-leucine from 3-methyl-2-oxobutanoate: step 1/4. Functionally, catalyzes the condensation of the acetyl group of acetyl-CoA with 3-methyl-2-oxobutanoate (2-ketoisovalerate) to form 3-carboxy-3-hydroxy-4-methylpentanoate (2-isopropylmalate). This is 2-isopropylmalate synthase from Thermotoga neapolitana (strain ATCC 49049 / DSM 4359 / NBRC 107923 / NS-E).